The sequence spans 344 residues: Succinylglutamate desuccinylase (344 aa).

Zn(2+) contacts are provided by His63, Glu66, and His160. The active site involves Glu224.

It belongs to the AspA/AstE family. Succinylglutamate desuccinylase subfamily. Zn(2+) serves as cofactor.

The catalysed reaction is N-succinyl-L-glutamate + H2O = L-glutamate + succinate. It functions in the pathway amino-acid degradation; L-arginine degradation via AST pathway; L-glutamate and succinate from L-arginine: step 5/5. Functionally, transforms N(2)-succinylglutamate into succinate and glutamate. This is Succinylglutamate desuccinylase from Shewanella baltica (strain OS223).